The following is a 263-amino-acid chain: Elongation factor Ts (263 aa).

The involved in Mg(2+) ion dislocation from EF-Tu stretch occupies residues 82–85; sequence TDFV. The span at 221–251 shows a compositional bias: low complexity; sequence APPAVVEAPVAETPEPAVAETPEAKPAATES. A disordered region spans residues 221-263; the sequence is APPAVVEAPVAETPEPAVAETPEAKPAATESKPAKSKSAKKKK. Residues 254–263 are compositionally biased toward basic residues; the sequence is AKSKSAKKKK.

Belongs to the EF-Ts family.

The protein resides in the cytoplasm. Functionally, associates with the EF-Tu.GDP complex and induces the exchange of GDP to GTP. It remains bound to the aminoacyl-tRNA.EF-Tu.GTP complex up to the GTP hydrolysis stage on the ribosome. The protein is Elongation factor Ts of Cyanothece sp. (strain PCC 7425 / ATCC 29141).